Reading from the N-terminus, the 38-residue chain is Potassium channel toxin alpha-KTx 3.8 (38 aa).

3 cysteine pairs are disulfide-bonded: cysteine 8/cysteine 28, cysteine 14/cysteine 33, and cysteine 18/cysteine 35. The interaction with Ca(2+)-activated K(+) channels stretch occupies residues 26 to 33 (GKCMNGKC).

Expressed by the venom gland.

The protein resides in the secreted. Its function is as follows. Potassium channel inhibitor. This is Potassium channel toxin alpha-KTx 3.8 from Hottentotta tamulus sindicus (Scorpion).